Here is a 161-residue protein sequence, read N- to C-terminus: Periplasmic chaperone Spy (161 aa).

The signal sequence occupies residues 1–23; it reads MRKLTALFVASTLALGAANLAHA. A disordered region spans residues 140–161; sequence ANFEKRLTERPAAKGKMPATAE. A compositionally biased stretch (basic and acidic residues) spans 142–151; it reads FEKRLTERPA.

Belongs to the CpxP/Spy family. Homodimer.

It is found in the periplasm. In terms of biological role, an ATP-independent periplasmic chaperone, decreases protein aggregation and helps protein refolding. Binds substrate over a large region of its convex inner surface. Substrate protein folds while it is bound to chaperone. Increasing Spy flexibility increases its substrate affinity and overall chaperone activity (shown for 3 different substrates). Protects proteins in vitro against tannin inactivation; tannins have antimicrobial activity. Overexpression enhances the stability of otherwise unstable periplasmic proteins. This Escherichia coli (strain K12) protein is Periplasmic chaperone Spy.